The primary structure comprises 317 residues: MAELACFCYPHLENDSYKFIPFNNLAIKCMLTAKVDKKDQDKFYNSIIYGIAPPPQFKKRYNTSDNSRGMNYETVMFNKVAVLICEALNSLKVTQSDVANVLSRVVSVRHLENLALRKENHQDVLFHSKELLLKSVLIAIGQSKEIETTATAEGGEIVFQNAAFTMWKLTYLDHELMPILDQNFIEYKITLNEDKPISDVCVKELVAELRWQYNRFAVITHGKGHYRVVKYSSVANHADRVFATYKNITKNGNAIDFNLLDQRIIWQNWYAFTSSMKQGNTLDVCKKLLFQKIKQEKNPFKGLSTDRKMDEVSHVGI.

ATP-binding positions include 107–109 (SVR), lysine 188, and 221–223 (HGK). The segment at 205–241 (LVAELRWQYNRFAVITHGKGHYRVVKYSSVANHADRV) is RNA-binding. Residue histidine 225 is the For NTPase and RTPase activities of the active site. Arginine 227 is a binding site for ATP.

Belongs to the rotavirus NSP2 family. As to quaternary structure, homooctamer. Interacts with VP1; this interaction is weak. Interacts with NSP5; this interaction leads to up-regulation of NSP5 phosphorylation and formation of viral factories. Interacts with host DCP1A, DCP1B, DDX6, EDC4 and EIF2S1/eIF2-alpha; these interactions are probably part of the sequestration of some host SGs and PBs proteins in viral factories. Mg(2+) serves as cofactor.

It localises to the host cytoplasm. Participates in replication and packaging of the viral genome. Plays a crucial role, together with NSP5, in the formation of virus factories (viroplasms), which are large inclusions in the host cytoplasm where replication intermediates are assembled and viral RNA replication takes place. Displays ssRNA binding, NTPase, RNA triphosphatase (RTPase) and ATP-independent helix-unwinding activities. The unwinding activity may prepare and organize plus-strand RNAs for packaging and replication by removing interfering secondary structures. The RTPase activity plays a role in the removal of the gamma-phosphate from the rotavirus RNA minus strands of dsRNA genome segments. Participates in the selective exclusion of host proteins from stress granules (SG) and P bodies (PB). Also participates in the sequestration of these remodeled organelles in viral factories. The chain is Non-structural protein 2 from Homo sapiens (Human).